Here is a 305-residue protein sequence, read N- to C-terminus: GTP cyclohydrolase FolE2 (305 aa).

The protein belongs to the GTP cyclohydrolase IV family.

The catalysed reaction is GTP + H2O = 7,8-dihydroneopterin 3'-triphosphate + formate + H(+). It functions in the pathway cofactor biosynthesis; 7,8-dihydroneopterin triphosphate biosynthesis; 7,8-dihydroneopterin triphosphate from GTP: step 1/1. Functionally, converts GTP to 7,8-dihydroneopterin triphosphate. The sequence is that of GTP cyclohydrolase FolE2 from Xanthomonas euvesicatoria pv. vesicatoria (strain 85-10) (Xanthomonas campestris pv. vesicatoria).